The following is a 203-amino-acid chain: Urease accessory protein UreG (203 aa).

Glycine 11 to threonine 18 lines the GTP pocket.

The protein belongs to the SIMIBI class G3E GTPase family. UreG subfamily. In terms of assembly, homodimer. UreD, UreF and UreG form a complex that acts as a GTP-hydrolysis-dependent molecular chaperone, activating the urease apoprotein by helping to assemble the nickel containing metallocenter of UreC. The UreE protein probably delivers the nickel.

The protein resides in the cytoplasm. Its function is as follows. Facilitates the functional incorporation of the urease nickel metallocenter. This process requires GTP hydrolysis, probably effectuated by UreG. The chain is Urease accessory protein UreG from Prochlorococcus marinus (strain AS9601).